Here is a 484-residue protein sequence, read N- to C-terminus: Cobyric acid synthase (484 aa).

The 188-residue stretch at 251 to 438 (ALKIAVPVLP…LHGLFCSDAY (188 aa)) folds into the GATase cobBQ-type domain. Residue cysteine 333 is the Nucleophile of the active site. Histidine 430 is a catalytic residue.

The protein belongs to the CobB/CobQ family. CobQ subfamily.

The protein operates within cofactor biosynthesis; adenosylcobalamin biosynthesis. Catalyzes amidations at positions B, D, E, and G on adenosylcobyrinic A,C-diamide. NH(2) groups are provided by glutamine, and one molecule of ATP is hydrogenolyzed for each amidation. The polypeptide is Cobyric acid synthase (Rhizobium rhizogenes (strain K84 / ATCC BAA-868) (Agrobacterium radiobacter)).